The primary structure comprises 804 residues: Mechanosensitive cation channel TMEM63A (804 aa).

Residues 1 to 51 (MTSSPFLDPWPSKAVFVRERLGLGERPNDSYCYNSAKNSTVLQGVTFGGIP) lie on the Extracellular side of the membrane. The N-linked (GlcNAc...) asparagine glycan is linked to N38. Residues 52 to 74 (TVLLLDVSCFLFLILVFSIIRRR) traverse the membrane as a helical segment. Residues 75–133 (FWDYGRIALVSEAGSEARFQRLSSSSSGQQDFENELGCCPWLTAIFRLHDDQILEWCGE) are Cytoplasmic-facing. A helical membrane pass occupies residues 134 to 166 (DAIHYLSFQRHIIFLLVVISFLSLCVILPVNLS). Topologically, residues 167–190 (GDLLGKDPYSFGRTTIANLQTDND) are extracellular. A helical membrane pass occupies residues 191-216 (LLWLHTVFSVIYLFLTVGFMWHHTRS). The Cytoplasmic segment spans residues 217–415 (IRYKEESLVR…CWKNLSIQGV (199 aa)). An intracellular linker IL2; confers mechanosensitivity region spans residues 218–413 (RYKEESLVRQ…DICWKNLSIQ (196 aa)). The helical transmembrane segment at 416 to 443 (RWWLQWLGINFSLFVVLFFLTTPSIIMS) threads the bilayer. Residues 444–461 (TMDKFNVTKPIHALNNPV) are Extracellular-facing. An N-linked (GlcNAc...) asparagine glycan is attached at N449. Residues 462 to 489 (ISQFFPTLLLWSFSALLPSIVYYSTLLE) form a helical membrane-spanning segment. Topologically, residues 490–494 (SHWTR) are cytoplasmic. A helical membrane pass occupies residues 495–531 (SGENRIMVSKVYIFLIFMVLILPSLGLTSLDFFFRWL). Over 532–553 (FDKTSSETSIRLECVFLPDQGA) the chain is Extracellular. The helical transmembrane segment at 554-585 (FFVNYVIASAFIGSGMELLRLPGLILYTFRMI) threads the bilayer. Residues 554–585 (FFVNYVIASAFIGSGMELLRLPGLILYTFRMI) form a gating helix region. Residues 586 to 605 (MAKTAADRRNVKQNQAFEYE) are Cytoplasmic-facing. A helical transmembrane segment spans residues 606 to 623 (FGAMYAWMLCVFTVIMAY). Residues 624 to 627 (SITC) are Extracellular-facing. The helical transmembrane segment at 628 to 650 (PIIVPFGLIYILLKHMVDRHNLY) threads the bilayer. The Cytoplasmic segment spans residues 651–660 (FAYLPAKLEK). A helical transmembrane segment spans residues 661–688 (RIHFAAVNQALAAPILCLFWLFFFSFLR). Topologically, residues 689 to 693 (LGLTA) are extracellular. The helical transmembrane segment at 694–708 (PATLFTFLVVLLTIL) threads the bilayer. At 709-804 (ACLLYTCFGC…GTAAYAYQES (96 aa)) the chain is on the cytoplasmic side. At S738 the chain carries Phosphoserine.

This sequence belongs to the CSC1 (TC 1.A.17) family. Monomer. In terms of processing, N-Glycosylated.

It localises to the lysosome membrane. The protein resides in the early endosome membrane. Its subcellular location is the cell membrane. The enzyme catalyses Ca(2+)(in) = Ca(2+)(out). Its function is as follows. Mechanosensitive cation channel with low conductance and high activation threshold. In contrast to TMEM63B, does not show phospholipid scramblase activity. Acts as a regulator of lysosomal morphology by mediating lysosomal mechanosensitivity. Important for the baby's first breath and respiration throughout life. Upon lung inflation conducts cation currents in alveolar type 1 and 2 cells triggering lamellar body exocytosis and surfactant secretion into airspace. Also acts as an osmosensitive cation channel preferentially activated by hypotonic stress. In Mus musculus (Mouse), this protein is Mechanosensitive cation channel TMEM63A.